A 395-amino-acid chain; its full sequence is Acetate kinase (395 aa).

Asn-8 contributes to the Mg(2+) binding site. Lys-15 lines the ATP pocket. Position 89 (Arg-89) interacts with substrate. Residue Asp-146 is the Proton donor/acceptor of the active site. ATP-binding positions include 206 to 210 (HLGNG), 281 to 283 (DLR), and 329 to 333 (GIGEN). Position 382 (Glu-382) interacts with Mg(2+).

The protein belongs to the acetokinase family. As to quaternary structure, homodimer. The cofactor is Mg(2+). It depends on Mn(2+) as a cofactor.

It localises to the cytoplasm. The catalysed reaction is acetate + ATP = acetyl phosphate + ADP. The protein operates within metabolic intermediate biosynthesis; acetyl-CoA biosynthesis; acetyl-CoA from acetate: step 1/2. Its activity is regulated as follows. Induced by glucose excess, the induction may be mediated by CcpA transcriptional regulator. Functionally, catalyzes the formation of acetyl phosphate from acetate and ATP. Can also catalyze the reverse reaction. Appears to favor the formation of acetate. Involved in the secretion of excess carbohydrate. This chain is Acetate kinase, found in Bacillus subtilis (strain 168).